Here is a 427-residue protein sequence, read N- to C-terminus: MSNNQILFERAQKTIPGGVNSPVRAFRSVGGTPRFVSRAQGPYFWDADGKQYIDYIGSWGPMIVGHVHPEVLSAVQNVLADGFSFGAPTEAEIEIAEEICKLVPSIEQVRMVSSGTEATMSALRLARGFTGRSRIVKFEGCYHGHADSLLVKAGSGLLTFGNPTSAGVPADIAKHTTVLEYNNVAALEEAFGAFGDEIAAVIVEPVAGNMNLVRGTPEFLNALRALCTKHGAVLIFDEVMCGFRVALGGAQQHYGITADLTCLGKVIGGGMPAAAFGGRRDIMAHLAPLGGVYQAGTLSGNPIAVAAGLKTLQLIQAPGFYDALTAQTKRLADGLAAEARAAGVPFAADSIGAMFGLYFAERVPTSFAEVTKSDTERFNRFFHLMLDEGVYFAPSAYEAGFVSSTHDDAVIDATLAAARRAFAALAA.

At Lys265 the chain carries N6-(pyridoxal phosphate)lysine.

It belongs to the class-III pyridoxal-phosphate-dependent aminotransferase family. HemL subfamily. Homodimer. The cofactor is pyridoxal 5'-phosphate.

Its subcellular location is the cytoplasm. The enzyme catalyses (S)-4-amino-5-oxopentanoate = 5-aminolevulinate. Its pathway is porphyrin-containing compound metabolism; protoporphyrin-IX biosynthesis; 5-aminolevulinate from L-glutamyl-tRNA(Glu): step 2/2. This chain is Glutamate-1-semialdehyde 2,1-aminomutase, found in Burkholderia ambifaria (strain ATCC BAA-244 / DSM 16087 / CCUG 44356 / LMG 19182 / AMMD) (Burkholderia cepacia (strain AMMD)).